The primary structure comprises 415 residues: Lipoyl synthase, mitochondrial (415 aa).

Residues 1-32 (MAASTNRLRFLYSSARTVPQTGSITPISRRTY) constitute a mitochondrion transit peptide. Residues 22–32 (GSITPISRRTY) are compositionally biased toward polar residues. Positions 22 to 53 (GSITPISRRTYATTEPSPSATGAPATARKRTN) are disordered. A compositionally biased stretch (low complexity) spans 33 to 47 (ATTEPSPSATGAPAT). [4Fe-4S] cluster-binding residues include C132, C137, C143, C163, C167, C170, and S378. Positions 146-367 (GSDKSAATAT…RQRALDMGFL (222 aa)) constitute a Radical SAM core domain. Residues 395-415 (AAGTAGESVTDSKAAVDEATR) form a disordered region.

It belongs to the radical SAM superfamily. Lipoyl synthase family. The cofactor is [4Fe-4S] cluster.

The protein localises to the mitochondrion. It catalyses the reaction [[Fe-S] cluster scaffold protein carrying a second [4Fe-4S](2+) cluster] + N(6)-octanoyl-L-lysyl-[protein] + 2 oxidized [2Fe-2S]-[ferredoxin] + 2 S-adenosyl-L-methionine + 4 H(+) = [[Fe-S] cluster scaffold protein] + N(6)-[(R)-dihydrolipoyl]-L-lysyl-[protein] + 4 Fe(3+) + 2 hydrogen sulfide + 2 5'-deoxyadenosine + 2 L-methionine + 2 reduced [2Fe-2S]-[ferredoxin]. It functions in the pathway protein modification; protein lipoylation via endogenous pathway; protein N(6)-(lipoyl)lysine from octanoyl-[acyl-carrier-protein]: step 2/2. Catalyzes the radical-mediated insertion of two sulfur atoms into the C-6 and C-8 positions of the octanoyl moiety bound to the lipoyl domains of lipoate-dependent enzymes, thereby converting the octanoylated domains into lipoylated derivatives. The sequence is that of Lipoyl synthase, mitochondrial from Aspergillus oryzae (strain ATCC 42149 / RIB 40) (Yellow koji mold).